Consider the following 407-residue polypeptide: MSADSADSVPSPRSAFATTLQIVSVVSFTFICYLTIGLPLAVLPGFVHDELGFSAIVAGAAISVQYFATLASRPLAGRCADTLGPKRTVLRGLAACGASGALLLSAFAFARWPAASIGLLVASRLVLGIGESLVGTGAILWGIGRVGTAHNARVISWNGIATYGALAIGAPVGVAISHALIPAVLGMLVIALAALGYYLARLITPVPLVHGERMSYASVLTRVLPHGLGLALGSAGFGSIATFITLYYAARHWPNAALSLTVFGTLFIGARLLFANTIKTHGGFRVAIVSFAFECAGLLMLWLAPVPHVALVGAALTGFGFALIFPALGVEAVALVPPASRGAALSAYSVFLDLSLGITGPLAGYVAGAFGYPQVFLCAAVAAAAGVALSTVLYQRQARLSGSGAAA.

12 helical membrane passes run 22–42, 51–71, 101–121, 126–146, 154–174, 179–199, 227–247, 258–278, 286–306, 309–329, 347–367, and 369–389; these read IVSVVSFTFICYLTIGLPLAV, LGFSAIVAGAAISVQYFATLA, ALLLSAFAFARWPAASIGLLV, VLGIGESLVGTGAILWGIGRV, VISWNGIATYGALAIGAPVGV, ALIPAVLGMLVIALAALGYYL, GLGLALGSAGFGSIATFITLY, LSLTVFGTLFIGARLLFANTI, VAIVSFAFECAGLLMLWLAPV, VALVGAALTGFGFALIFPALG, AYSVFLDLSLGITGPLAGYVA, and AFGYPQVFLCAAVAAAAGVAL.

Belongs to the major facilitator superfamily. YhhS family.

The protein resides in the cell inner membrane. This is an uncharacterized protein from Burkholderia mallei (strain NCTC 10229).